The primary structure comprises 377 residues: Transmembrane protein 237A (377 aa).

3 stretches are compositionally biased toward basic and acidic residues: residues 1-11, 43-64, and 74-87; these read MCVTSRADKMP, LESR…DNPP, and HTFE…DHPN. Residues 1–124 are disordered; it reads MCVTSRADKM…NQSHNELGVE (124 aa). A run of 4 helical transmembrane segments spans residues 198–218, 239–259, 273–293, and 326–346; these read IIGL…IIVV, LAYP…VSAF, GFLT…ALIL, and PWIV…VFVA.

The protein belongs to the TMEM237 family.

Its subcellular location is the membrane. It is found in the cell projection. The protein localises to the cilium. In terms of biological role, component of the transition zone in primary cilia. Required for ciliogenesis. The sequence is that of Transmembrane protein 237A (tmem237a) from Danio rerio (Zebrafish).